We begin with the raw amino-acid sequence, 266 residues long: Ciliary microtubule inner protein 4 (266 aa).

2 stretches are compositionally biased toward polar residues: residues 1–15 and 24–38; these read MELS…LTRT and QDMN…SLDN. Residues 1 to 124 are disordered; sequence MELSHRQGTT…SPEQRTVPLS (124 aa). Residues 47–63 are compositionally biased toward low complexity; the sequence is LSQSPLGSSLGQGYLET. A compositionally biased stretch (basic and acidic residues) spans 81-102; that stretch reads HPEDLKKGASRSSSRDARETFR.

As to expression, only detected in testis, in the spermatids and sperm within the seminiferous tubules (at protein level).

The protein localises to the cytoplasmic vesicle. It is found in the secretory vesicle. It localises to the acrosome. Its subcellular location is the cell projection. The protein resides in the cilium. The protein localises to the flagellum. Seems to be associated with spermiogenesis but is not essential for sperm development and male fertility. The protein is Ciliary microtubule inner protein 4 (Cimip4) of Mus musculus (Mouse).